Here is a 95-residue protein sequence, read N- to C-terminus: MARVTVEDAVDKVGNRFDLVLVASRRARQIATGGKDPLVDVENDKPTVIALREIEAGLITTDIMNTSDRAQQIQQDTAELDAVAAIVGGQQEELS.

The protein belongs to the RNA polymerase subunit omega family. As to quaternary structure, the RNAP catalytic core consists of 2 alpha, 1 beta, 1 beta' and 1 omega subunit. When a sigma factor is associated with the core the holoenzyme is formed, which can initiate transcription.

The catalysed reaction is RNA(n) + a ribonucleoside 5'-triphosphate = RNA(n+1) + diphosphate. Functionally, promotes RNA polymerase assembly. Latches the N- and C-terminal regions of the beta' subunit thereby facilitating its interaction with the beta and alpha subunits. This Colwellia psychrerythraea (strain 34H / ATCC BAA-681) (Vibrio psychroerythus) protein is DNA-directed RNA polymerase subunit omega.